The following is a 37-amino-acid chain: Large ribosomal subunit protein bL36c (37 aa).

This sequence belongs to the bacterial ribosomal protein bL36 family.

It is found in the plastid. It localises to the chloroplast. This chain is Large ribosomal subunit protein bL36c, found in Gnetum parvifolium (Small-leaved jointfir).